A 714-amino-acid chain; its full sequence is Polyribonucleotide nucleotidyltransferase (714 aa).

Residues aspartate 496 and aspartate 502 each contribute to the Mg(2+) site. One can recognise a KH domain in the interval 562–621; it reads PRLLTIKIDPDLIGMVIGPGGKTIKGITEQTRAKVDIADDGTVTIASSESENAEKAKRLI. The 69-residue stretch at 631 to 699 folds into the S1 motif domain; it reads GDVYFGKVTR…NKGRINLTRL (69 aa).

It belongs to the polyribonucleotide nucleotidyltransferase family. The cofactor is Mg(2+).

The protein resides in the cytoplasm. The catalysed reaction is RNA(n+1) + phosphate = RNA(n) + a ribonucleoside 5'-diphosphate. Involved in mRNA degradation. Catalyzes the phosphorolysis of single-stranded polyribonucleotides processively in the 3'- to 5'-direction. The chain is Polyribonucleotide nucleotidyltransferase from Picosynechococcus sp. (strain ATCC 27264 / PCC 7002 / PR-6) (Agmenellum quadruplicatum).